The chain runs to 414 residues: uncharacterized protein (414 aa).

It belongs to the glycosyltransferase 28 family.

This is an uncharacterized protein from Mycobacterium tuberculosis (strain CDC 1551 / Oshkosh).